Here is a 312-residue protein sequence, read N- to C-terminus: Ribonuclease HIII (312 aa).

In terms of domain architecture, RNase H type-2 spans 95–311 (FNCIGSDEAG…REKAQKILKP (217 aa)). The a divalent metal cation site is built by D101, E102, and D206.

Belongs to the RNase HII family. RnhC subfamily. Mn(2+) serves as cofactor. Requires Mg(2+) as cofactor.

The protein localises to the cytoplasm. The enzyme catalyses Endonucleolytic cleavage to 5'-phosphomonoester.. Endonuclease that specifically degrades the RNA of RNA-DNA hybrids. The polypeptide is Ribonuclease HIII (Staphylococcus aureus (strain MSSA476)).